The sequence spans 129 residues: Small ribosomal subunit protein uS8c (129 aa).

This sequence belongs to the universal ribosomal protein uS8 family. Part of the 30S ribosomal subunit.

It is found in the plastid. The protein resides in the chloroplast. In terms of biological role, one of the primary rRNA binding proteins, it binds directly to 16S rRNA central domain where it helps coordinate assembly of the platform of the 30S subunit. This is Small ribosomal subunit protein uS8c (rps8) from Oltmannsiellopsis viridis (Marine flagellate).